A 530-amino-acid polypeptide reads, in one-letter code: UDP-glucuronosyltransferase 1A10 (530 aa).

The signal sequence occupies residues 1–25 (MARAGWTSPVPLCVCLLLTCGFAEA). Residues N71, N292, and N344 are each glycosylated (N-linked (GlcNAc...) asparagine). The chain crosses the membrane as a helical span at residues 488 to 504 (VIGFLLAVVLTVAFITF).

The protein belongs to the UDP-glycosyltransferase family. Homodimer. Homooligomer. Interacts with UGT1A1, UGT1A3, UGT1A4, UGT1A6, UGT1A7, UGT1A8 and UGT1A9 to form heterodimers. Isoform 1 interacts with isoform 2/i2 suggesting that oligomerization is involved in negative regulation of transferase activity by isoform 2. Isoform 1 also interacts with respective i2 isoforms of UGT1A1, UGT1A3, UGT1A4, UGT1A6, UGT1A7, UGT1A8 and UGT1A9. As to expression, liver and colon. Isoform 1 and isoform 2 are expressed in colon, esophagus and small intestine; isoform 2 but not isoform 1 is expressed in liver or kidney.

The protein localises to the endoplasmic reticulum membrane. It catalyses the reaction glucuronate acceptor + UDP-alpha-D-glucuronate = acceptor beta-D-glucuronoside + UDP + H(+). It carries out the reaction 17beta-estradiol + UDP-alpha-D-glucuronate = 17beta-estradiol 3-O-(beta-D-glucuronate) + UDP + H(+). The enzyme catalyses 17beta-estradiol + UDP-alpha-D-glucuronate = 17beta-estradiol 17-O-(beta-D-glucuronate) + UDP + H(+). The catalysed reaction is 17alpha-estradiol + UDP-alpha-D-glucuronate = 17alpha-estradiol 3-O-(beta-D-glucuronate) + UDP + H(+). It catalyses the reaction 16alpha,17beta-estriol + UDP-alpha-D-glucuronate = 16alpha,17beta-estriol 3-O-(beta-D-glucuronate) + UDP + H(+). It carries out the reaction 16beta,17beta-estriol + UDP-alpha-D-glucuronate = 16beta,17beta-estriol 3-O-(beta-D-glucuronate) + UDP + H(+). The enzyme catalyses 16alpha,17alpha-estriol + UDP-alpha-D-glucuronate = 16alpha,17alpha-estriol 3-O-(beta-D-glucuronate) + UDP + H(+). The catalysed reaction is 16alpha-hydroxyestrone + UDP-alpha-D-glucuronate = 16alpha-hydroxyestrone 3-O-(beta-D-glucuronate) + UDP + H(+). It catalyses the reaction estrone + UDP-alpha-D-glucuronate = estrone 3-O-(beta-D-glucuronate) + UDP + H(+). It carries out the reaction prunetin + UDP-alpha-D-glucuronate = prunetin-4'-O-beta-D-glucuronide + UDP. The enzyme catalyses (5Z,8Z,11Z,14Z)-eicosatetraenoate + UDP-alpha-D-glucuronate = O-[(5Z),(8Z),(11Z),(14Z)-eicosatetraenoyl]-beta-D-glucuronate + UDP. The catalysed reaction is 15-hydroxy-(5Z,8Z,11Z,13E)-eicosatetraenoate + UDP-alpha-D-glucuronate = 15-O-(beta-D-glucuronosyl)-(5Z,8Z,11Z,14Z)-eicosatetraenoate + UDP + H(+). It catalyses the reaction prostaglandin B1 + UDP-alpha-D-glucuronate = 15-O-(beta-D-glucuronosyl)-prostaglandin B1 + UDP + H(+). It carries out the reaction (E)-ferulate + UDP-alpha-D-glucuronate = (E)-4-O-(beta-D-glucuronosyl)-ferulate + UDP + H(+). The enzyme catalyses (E)-ferulate + UDP-alpha-D-glucuronate = (E)-ferulic acid beta-D-glucuronate ester + UDP. The catalysed reaction is losartan + UDP-alpha-D-glucuronate = losartan-2-N-beta-D-glucuronide + UDP. It catalyses the reaction candesartan + UDP-alpha-D-glucuronate = candesartan O-beta-D-glucuronoside + UDP. It carries out the reaction candesartan + UDP-alpha-D-glucuronate = candesartan-2-N-beta-D-glucuronide + UDP. The enzyme catalyses zolasartan + UDP-alpha-D-glucuronate = zolarsartan-1-N-beta-D-glucuronide + UDP. In terms of biological role, UDP-glucuronosyltransferase (UGT) that catalyzes phase II biotransformation reactions in which lipophilic substrates are conjugated with glucuronic acid to increase the metabolite's water solubility, thereby facilitating excretion into either the urine or bile. Essential for the elimination and detoxification of drugs, xenobiotics and endogenous compounds. Catalyzes the glucuronidation of endogenous estrogen hormones such as estradiol, estrone and estriol. Involved in the glucuronidation of arachidonic acid (AA) and AA-derived eicosanoids including 15-HETE and PGB1. Involved in the glucuronidation of the phytochemical ferulic acid at the phenolic or the carboxylic acid group. Also catalyzes the glucuronidation of the isoflavones genistein, daidzein, glycitein, formononetin, biochanin A and prunetin, which are phytoestrogens with anticancer and cardiovascular properties. Involved in the glucuronidation of the AGTR1 angiotensin receptor antagonist losartan, caderastan and zolarsatan, drugs which can inhibit the effect of angiotensin II. Its function is as follows. Lacks UGT glucuronidation activity but acts as a negative regulator of isoform 1. This is UDP-glucuronosyltransferase 1A10 from Homo sapiens (Human).